The chain runs to 239 residues: MKDTLFNQSLNKRFCFDEKVAHVFDDMLERSIPYYHEMLDLGAYFIAQNLKENINPKPLIYDLGCSTGNFFIALNQQIQQDIELVGIDNSMPMLKKAQEKLKDFNNARFECMDFLEVEFKEASAFSLLFVLQFVRPMQREVLLKKIYNSLALNGVLLVGEKIMSEDRILDKQMIELYYLYKQNQGYSHNEIAFKREALENVLVPYSLKENVALLESVGFKHVEALFKWVNFTLLVARKT.

Residues Tyr-35, 64–66, 88–89, and Arg-195 contribute to the S-adenosyl-L-methionine site; these read GCS and DN.

This sequence belongs to the class I-like SAM-binding methyltransferase superfamily. Cx-SAM synthase family. In terms of assembly, homodimer.

The enzyme catalyses prephenate + S-adenosyl-L-methionine = carboxy-S-adenosyl-L-methionine + 3-phenylpyruvate + H2O. In terms of biological role, catalyzes the conversion of S-adenosyl-L-methionine (SAM) to carboxy-S-adenosyl-L-methionine (Cx-SAM). The chain is Carboxy-S-adenosyl-L-methionine synthase from Helicobacter pylori (strain Shi470).